Here is a 219-residue protein sequence, read N- to C-terminus: Cytidylate kinase (219 aa).

Residue 21-29 (GPAASGKGT) coordinates ATP.

Belongs to the cytidylate kinase family. Type 1 subfamily.

It is found in the cytoplasm. The enzyme catalyses CMP + ATP = CDP + ADP. The catalysed reaction is dCMP + ATP = dCDP + ADP. The polypeptide is Cytidylate kinase (Rickettsia typhi (strain ATCC VR-144 / Wilmington)).